Reading from the N-terminus, the 482-residue chain is Aspartyl/glutamyl-tRNA(Asn/Gln) amidotransferase subunit B (482 aa).

The protein belongs to the GatB/GatE family. GatB subfamily. Heterotrimer of A, B and C subunits.

The catalysed reaction is L-glutamyl-tRNA(Gln) + L-glutamine + ATP + H2O = L-glutaminyl-tRNA(Gln) + L-glutamate + ADP + phosphate + H(+). The enzyme catalyses L-aspartyl-tRNA(Asn) + L-glutamine + ATP + H2O = L-asparaginyl-tRNA(Asn) + L-glutamate + ADP + phosphate + 2 H(+). Allows the formation of correctly charged Asn-tRNA(Asn) or Gln-tRNA(Gln) through the transamidation of misacylated Asp-tRNA(Asn) or Glu-tRNA(Gln) in organisms which lack either or both of asparaginyl-tRNA or glutaminyl-tRNA synthetases. The reaction takes place in the presence of glutamine and ATP through an activated phospho-Asp-tRNA(Asn) or phospho-Glu-tRNA(Gln). The chain is Aspartyl/glutamyl-tRNA(Asn/Gln) amidotransferase subunit B from Azotobacter vinelandii (strain DJ / ATCC BAA-1303).